A 149-amino-acid chain; its full sequence is UPAR/Ly6 domain-containing protein bou (149 aa).

The N-terminal stretch at 1–31 (MWPPKHAHIGWLSSLALVVLLMSLQMVMVSG) is a signal peptide. Topologically, residues 32 to 126 (IECYVCDTSD…YTCDTDGCNA (95 aa)) are extracellular. Intrachain disulfides connect Cys34-Cys74, Cys37-Cys48, Cys65-Cys91, Cys100-Cys115, and Cys119-Cys124. A glycan (N-linked (GlcNAc...) asparagine) is linked at Asn64. The GPI-anchor amidated asparagine moiety is linked to residue Asn125. Positions 126-149 (AAGRLELEWGVAAALLTLTWLLRH) are cleaved as a propeptide — removed in mature form. The helical transmembrane segment at 127-147 (AGRLELEWGVAAALLTLTWLL) threads the bilayer. At 148 to 149 (RH) the chain is on the cytoplasmic side.

Post-translationally, GPI-anchored.

It is found in the cell membrane. Its subcellular location is the cell junction. It localises to the septate junction. The protein localises to the cytoplasm. The protein resides in the cell cortex. It is found in the secreted. Its subcellular location is the apicolateral cell membrane. Its function is as follows. Involved in tracheal paracellular barrier functions mediated by epithelial cell septate junctions. Involved in paracellular barrier functions mediated by glial cell septate junctions in the peripheral nervous system, including the chordotonal organs, but not the hemolymph-brain barrier (the insect blood-brain barrier) of the central nervous system. Required for septate junction assembly, possibly by organizing the preassembly and transport of septate junction proteins such as dlg1/disks large 1, Nrx-IV/Neurexin-IV and the claudin protein kune. Involved in chitin fiber organization during tracheal development. Secreted, possibly in association with extracellular vesicles, to act non-autonomously on tissues distant from its site of expression. This is UPAR/Ly6 domain-containing protein bou from Drosophila melanogaster (Fruit fly).